The following is a 1530-amino-acid chain: Coiled-coil domain-containing protein 141 (1530 aa).

The Spectrin repeat unit spans residues 49–127 (NLLEIGSSQD…SMLERRRELL (79 aa)). Threonine 91 is subject to Phosphothreonine. Coiled-coil stretches lie at residues 220–251 (IDSLLELLQDRRRQLDKHLQQQRQELSQVLQL), 758–785 (LKEKAEQLKDLIHLHQRQRERIQEYEEI), and 865–967 (AKSL…VNKK). Disordered regions lie at residues 1153-1240 (SEER…PASS), 1259-1285 (LGKAPESVLPPPTAFTDGYHNKKDTFT), 1324-1356 (PREVHDKALPPSSQAQEISLGTQEKVHADSNVT), and 1369-1403 (SPGLSSQSDTSRSHQRQVGPQGDRKNSSAEKSVVS). Residues 1334 to 1345 (PSSQAQEISLGT) are compositionally biased toward polar residues. In terms of domain architecture, Ig-like spans 1409–1497 (PHFSRLLSNV…GTLSSKAILH (89 aa)).

In terms of assembly, interacts with DISC1. Interacts preferentially with phosphorylated forms of myosin regulatory light chain (MRLC). Interacts (via the N-terminal region) with HDAC6; inhibits the deacetylase activity of HDAC6. Interacts with KIBRA (via the C-terminal region); retains AMPAR in the cytosol after internalization. Ubiquitinated and degradated by the CDC20-APC/C pathway. During brain development, CDC20-APC/C complex degrades CCDC141 after centrosome translocation into the dilated area. CCDC141 is restabilized in the dilation until the centrosome enters the dilation, at which point it is once again immediately destabilized by CDC20-APC/C complex. The oscillatory regulation of CCDC141 protein is needed for proper cortical migration. In terms of processing, phosphorylation at Thr-91 by PLK1 affects CCDC141 degradation.

The protein resides in the cytoplasm. It localises to the cytoskeleton. It is found in the microtubule organizing center. The protein localises to the centrosome. Plays a critical role in cortical radial and GnRH neurons migration during brain development. Regulates cortical radial migration by negatively controlling the activity of histone deacetylase 6 (HDAC6) and promotes centrosome maturation. CAMDI is required for dilation formation of cortical neurons during radial migration. Plays a critical role in learning and memory performance through regulation of AMPA-selective glutamate receptors (AMPARs) cell surface expression in competition with KIBRA. This chain is Coiled-coil domain-containing protein 141, found in Rattus norvegicus (Rat).